The chain runs to 627 residues: Phosphomethylpyrimidine synthase (627 aa).

A compositionally biased stretch (polar residues) spans 1 to 21 (MSAQQQKNLSESAQVDQQSVQ). Positions 1–32 (MSAQQQKNLSESAQVDQQSVQPFPRSQKVYVQ) are disordered. Substrate is bound by residues N231, M260, Y289, H325, 345–347 (SRG), 386–389 (DGLR), and E425. H429 is a binding site for Zn(2+). Y452 provides a ligand contact to substrate. Position 493 (H493) interacts with Zn(2+). C573, C576, and C581 together coordinate [4Fe-4S] cluster.

Belongs to the ThiC family. Homodimer. The cofactor is [4Fe-4S] cluster.

The catalysed reaction is 5-amino-1-(5-phospho-beta-D-ribosyl)imidazole + S-adenosyl-L-methionine = 4-amino-2-methyl-5-(phosphooxymethyl)pyrimidine + CO + 5'-deoxyadenosine + formate + L-methionine + 3 H(+). The protein operates within cofactor biosynthesis; thiamine diphosphate biosynthesis. Functionally, catalyzes the synthesis of the hydroxymethylpyrimidine phosphate (HMP-P) moiety of thiamine from aminoimidazole ribotide (AIR) in a radical S-adenosyl-L-methionine (SAM)-dependent reaction. This is Phosphomethylpyrimidine synthase from Ectopseudomonas mendocina (strain ymp) (Pseudomonas mendocina).